The chain runs to 568 residues: Dihydroxy-acid dehydratase 1 (568 aa).

The segment at 1–22 (MAEQTNTPDLKPRSRDVTDGLE) is disordered. The segment covering 10 to 22 (LKPRSRDVTDGLE) has biased composition (basic and acidic residues). Cys-57 contacts [2Fe-2S] cluster. Asp-89 contributes to the Mg(2+) binding site. Residue Cys-130 participates in [2Fe-2S] cluster binding. Mg(2+)-binding residues include Asp-131 and Lys-132. At Lys-132 the chain carries N6-carboxylysine. Cys-207 serves as a coordination point for [2Fe-2S] cluster. Glu-458 is a binding site for Mg(2+). The Proton acceptor role is filled by Ser-484.

It belongs to the IlvD/Edd family. Homodimer. The cofactor is [2Fe-2S] cluster. Mg(2+) is required as a cofactor.

It carries out the reaction (2R)-2,3-dihydroxy-3-methylbutanoate = 3-methyl-2-oxobutanoate + H2O. It catalyses the reaction (2R,3R)-2,3-dihydroxy-3-methylpentanoate = (S)-3-methyl-2-oxopentanoate + H2O. The protein operates within amino-acid biosynthesis; L-isoleucine biosynthesis; L-isoleucine from 2-oxobutanoate: step 3/4. Its pathway is amino-acid biosynthesis; L-valine biosynthesis; L-valine from pyruvate: step 3/4. Functions in the biosynthesis of branched-chain amino acids. Catalyzes the dehydration of (2R,3R)-2,3-dihydroxy-3-methylpentanoate (2,3-dihydroxy-3-methylvalerate) into 2-oxo-3-methylpentanoate (2-oxo-3-methylvalerate) and of (2R)-2,3-dihydroxy-3-methylbutanoate (2,3-dihydroxyisovalerate) into 2-oxo-3-methylbutanoate (2-oxoisovalerate), the penultimate precursor to L-isoleucine and L-valine, respectively. The polypeptide is Dihydroxy-acid dehydratase 1 (Nocardia farcinica (strain IFM 10152)).